Reading from the N-terminus, the 60-residue chain is Small ribosomal subunit protein eS31 (60 aa).

The Zn(2+) site is built by Cys27, Cys30, Cys45, and Cys48. A C4-type zinc finger spans residues 27–48 (CPRCGPGVFMAEHLNRYACGKC).

The protein belongs to the eukaryotic ribosomal protein eS31 family. Part of the 30S ribosomal subunit. It depends on Zn(2+) as a cofactor.

The sequence is that of Small ribosomal subunit protein eS31 from Methanocaldococcus jannaschii (strain ATCC 43067 / DSM 2661 / JAL-1 / JCM 10045 / NBRC 100440) (Methanococcus jannaschii).